Consider the following 449-residue polypeptide: MIEPVRVIGGGIAGAEAAWQCARAGVPVVLSEMRPVRPSPAHHTDHLGELVCSNSFGAMATDRAPGLLKEELRRLGSLVIAVADAHAVPAGGALAVDRAVYTRELTERVANHPLIELRREEVTEIPAAGLVVFATGPLTSEPLAHGLQALTGLGYLSFFDAASPIVAGESLDTEKVFLASRYDRGEAAYYNCPMSEPEYRAFWEALASAEQAELKEFEHEERKFFEACLPVEELARRGYETLRYGPLKPVGLTDPRTGRWPFACVQLRQEDRAGRLWNLVGFQTNLKWGEQKRVFQMIPGLEQAEFVRLGVMHRNTFLCSPHLLAPTLQFHAHPRLLACGQLTGTEGYTAAVAGGWLAGTNAARLAQSRDPLVLPVETMAGALVDYVSHGDPKTFQPMPPNFALLPEITPRIRHKQQRYWAYRDRALAAIDTFGRTHGLGAAPALARAN.

Residue 9–14 (GGGIAG) coordinates FAD.

The protein belongs to the MnmG family. TrmFO subfamily. Requires FAD as cofactor.

It is found in the cytoplasm. It catalyses the reaction uridine(54) in tRNA + (6R)-5,10-methylene-5,6,7,8-tetrahydrofolate + NADH + H(+) = 5-methyluridine(54) in tRNA + (6S)-5,6,7,8-tetrahydrofolate + NAD(+). The catalysed reaction is uridine(54) in tRNA + (6R)-5,10-methylene-5,6,7,8-tetrahydrofolate + NADPH + H(+) = 5-methyluridine(54) in tRNA + (6S)-5,6,7,8-tetrahydrofolate + NADP(+). Its function is as follows. Catalyzes the folate-dependent formation of 5-methyl-uridine at position 54 (M-5-U54) in all tRNAs. This is Methylenetetrahydrofolate--tRNA-(uracil-5-)-methyltransferase TrmFO from Gloeobacter violaceus (strain ATCC 29082 / PCC 7421).